The following is a 382-amino-acid chain: Sphingoid long-chain base transporter RSB1 (382 aa).

The Extracellular segment spans residues 1-34; sequence MSNATNNTLGSLLPQLEAAANSNSLYGGMVPNLR. Residues N3 and N6 are each glycosylated (N-linked (GlcNAc...) asparagine). Residues 35-55 form a helical membrane-spanning segment; that stretch reads FNITMIVIWGILLTIHVVQLL. At 56-57 the chain is on the cytoplasmic side; sequence MR. A helical transmembrane segment spans residues 58 to 78; it reads QYWFSIAFICTGILEVLGFIG. Topologically, residues 79–90 are extracellular; the sequence is RTWSHSNVADMD. Residues 91–111 traverse the membrane as a helical segment; that stretch reads AFLLNMICLTIAPVFTMGGIY. The Cytoplasmic portion of the chain corresponds to 112–135; sequence YQLAKLIEVYGHRFSLLPSPMAYS. Residues 136–156 traverse the membrane as a helical segment; that stretch reads FIFICSDIVSLVVQAVGGGLC. Residues 157–171 are Extracellular-facing; sequence GVAVTDGTSTTTGNH. A helical transmembrane segment spans residues 172 to 192; that stretch reads VFIAGLAIQVASMAIFLMLWF. Residues 193 to 241 are Cytoplasmic-facing; the sequence is HFLFRIYISVRWEHINSRPISLSLLKISQTEVDYLYREKFHFLRLEPKR. Residues 242–262 form a helical membrane-spanning segment; it reads WVFHYFNLAITVAVLTIFTRC. Residues 263–281 lie on the Extracellular side of the membrane; that stretch reads CYRLAELVVGWDGYLITHE. A helical membrane pass occupies residues 282 to 302; that stretch reads WYFIILDALMMAIATVTLTIF. The Cytoplasmic segment spans residues 303–382; that stretch reads HPGFAFKGKS…LFSSKKKAKL (80 aa).

This sequence belongs to the lipid-translocating exporter (LTE) (TC 9.A.26.1) family.

Its subcellular location is the cell membrane. Catalyzes the ATP-dependent translocation of sphingoid long-chain bases (LCBs) from the cytoplasmic site toward the extracytoplasmic side of the membrane (flip-flop). Involved in the establishment of the functional lipid asymmetry of the plasma membrane. Regulates intracellular levels of LCBs, sphingolipid precursors that are growth inhibitory at increased levels. This chain is Sphingoid long-chain base transporter RSB1 (RSB1), found in Saccharomyces cerevisiae (strain JAY291) (Baker's yeast).